Here is a 90-residue protein sequence, read N- to C-terminus: UPF0329 protein ECU04_1650 (90 aa).

The protein belongs to the UPF0329 family.

This chain is UPF0329 protein ECU04_1650, found in Encephalitozoon cuniculi (strain GB-M1) (Microsporidian parasite).